Consider the following 290-residue polypeptide: Short chain dehydrogenase andI (290 aa).

NADP(+) is bound by residues I35, N120, R154, Y186, K190, V219, and T221. The active-site Proton acceptor is Y186. K190 serves as the catalytic Lowers pKa of active site Tyr.

It belongs to the short-chain dehydrogenases/reductases (SDR) family.

It functions in the pathway secondary metabolite biosynthesis; terpenoid biosynthesis. Short chain dehydrogenase; part of the gene cluster that mediates the biosynthesis of anditomin, a fungal meroterpenoid. The first step of the pathway is the synthesis of 3,5-dimethylorsellinic acid (DMOA) by the polyketide synthase andM. DMOA is then converted to the phthalide compound 5,7-dihydroxy-4,6-dimethylphthalide (DHDMP) by the cytochrome P450 monooxygenase andK, which is further prenylated by the prenyltransferase andD to yield farnesyl-DHDMP. Further epoxidation by the FAD-dependent monooxygenase andE leads to epoxyfarnesyl-DHDMP. The next step involves the terpene cyclase andB that converts epoxyfarnesyl-DHDMP into preandiloid A through opening of the epoxide ring followed by the cyclization of the farnesyl moiety. Preandiloid A is in turn oxidized at the C-3 hydroxyl group to yield preandiloid B by the dehydrogenase andC. The dioxygenase andA is solely responsible for the dehydrogenation of preandiloid B leading to the enone preandiloid C, as well as for the intriguing structural rearrangement to generate the bicyclo[2.2.2]octane core, transforming preandiloid C into andiconin. FAD-binding monooxygenase andJ then produces andilesin D which is reduced by dehydrogenase andI to yield andilesin A. Action of acetyltransferase andG followed by a spontaneous acetate elimination leads then to andilesin B, which is in turn substrate of the short chain dehydrogenase andH to yield andilesin C. Finally, the dioxygenase andF catalyzes the transformation of andilesin C to anditomin. In Emericella variicolor (Aspergillus stellatus), this protein is Short chain dehydrogenase andI.